Reading from the N-terminus, the 227-residue chain is MMAAGAALALALWLLMPPVEVGGAGPPPIQDGEFTFLLPAGRKQCFYQSAPANASLETEYQVIGGAGLDVDFTLESPQGVLLVSESRKADGVHTVEPTEAGDYKLCFDNSFSTISEKLVFFELIFDSLQDDEEVEGWAEAVEPEEMLDVKMEDIKESIETMRTRLERSIQMLTLLRAFEARDRNLQEGNLERVNFWSAVNVAVLLLVAVLQVCTLKRFFQDKRPVPT.

The first 23 residues, 1 to 23 (MMAAGAALALALWLLMPPVEVGG), serve as a signal peptide directing secretion. Residues 24 to 194 (AGPPPIQDGE…LQEGNLERVN (171 aa)) lie on the Extracellular side of the membrane. The region spanning 43-125 (KQCFYQSAPA…EKLVFFELIF (83 aa)) is the GOLD domain. A coiled-coil region spans residues 145 to 170 (EMLDVKMEDIKESIETMRTRLERSIQ). The chain crosses the membrane as a helical span at residues 195-215 (FWSAVNVAVLLLVAVLQVCTL). Topologically, residues 216–227 (KRFFQDKRPVPT) are cytoplasmic. Positions 218 to 219 (FF) match the COPII vesicle coat-binding motif. Positions 218 to 227 (FFQDKRPVPT) match the COPI vesicle coat-binding motif.

The protein belongs to the EMP24/GP25L family. Homodimer in endoplasmic reticulum, endoplasmic reticulum-Golgi intermediate compartment and cis-Golgi network. Interacts with IL1RL1. Interacts with RNF26; this interaction is important to modulate innate immune signaling through the cGAS-STING pathway. In terms of tissue distribution, widely expressed.

It localises to the cell membrane. Its subcellular location is the endoplasmic reticulum membrane. The protein resides in the golgi apparatus. The protein localises to the cis-Golgi network membrane. It is found in the endoplasmic reticulum-Golgi intermediate compartment membrane. In terms of biological role, potential role in vesicular protein trafficking, mainly in the early secretory pathway. May act as a cargo receptor at the lumenal side for incorporation of secretory cargo molecules into transport vesicles and may be involved in vesicle coat formation at the cytoplasmic side. Plays a positive role in IL-33-mediated IL-8 and IL-6 production by interacting with interleukin-33 receptor IL1RL1. Also plays a role in the modulation of innate immune signaling through the cGAS-STING pathway by interacting with RNF26. This is Transmembrane emp24 domain-containing protein 1 (TMED1) from Homo sapiens (Human).